Consider the following 400-residue polypeptide: Tryptophan synthase beta chain (400 aa).

An N6-(pyridoxal phosphate)lysine modification is found at Lys92.

Belongs to the TrpB family. Tetramer of two alpha and two beta chains. Pyridoxal 5'-phosphate is required as a cofactor.

The catalysed reaction is (1S,2R)-1-C-(indol-3-yl)glycerol 3-phosphate + L-serine = D-glyceraldehyde 3-phosphate + L-tryptophan + H2O. It participates in amino-acid biosynthesis; L-tryptophan biosynthesis; L-tryptophan from chorismate: step 5/5. Functionally, the beta subunit is responsible for the synthesis of L-tryptophan from indole and L-serine. In Neisseria meningitidis serogroup C (strain 053442), this protein is Tryptophan synthase beta chain.